A 745-amino-acid polypeptide reads, in one-letter code: Elongation factor G, mitochondrial (745 aa).

One can recognise a tr-type G domain in the interval 40–317 (EKIRNIGISA…AVLDYLPNPG (278 aa)). GTP is bound by residues 49–56 (AHIDSGKT), 116–120 (DTPGH), and 170–173 (NKLD).

This sequence belongs to the TRAFAC class translation factor GTPase superfamily. Classic translation factor GTPase family. EF-G/EF-2 subfamily.

Its subcellular location is the mitochondrion. Its pathway is protein biosynthesis; polypeptide chain elongation. Mitochondrial GTPase that catalyzes the GTP-dependent ribosomal translocation step during translation elongation. During this step, the ribosome changes from the pre-translocational (PRE) to the post-translocational (POST) state as the newly formed A-site-bound peptidyl-tRNA and P-site-bound deacylated tRNA move to the P and E sites, respectively. Catalyzes the coordinated movement of the two tRNA molecules, the mRNA and conformational changes in the ribosome. Essential during development as it acts as a retrograde signal from mitochondria to the nucleus to slow down cell proliferation if mitochondrial energy output is low. The chain is Elongation factor G, mitochondrial from Drosophila willistoni (Fruit fly).